Reading from the N-terminus, the 488-residue chain is Glycogen synthase (488 aa).

Lys-16 contacts ADP-alpha-D-glucose.

It belongs to the glycosyltransferase 1 family. Bacterial/plant glycogen synthase subfamily.

The enzyme catalyses [(1-&gt;4)-alpha-D-glucosyl](n) + ADP-alpha-D-glucose = [(1-&gt;4)-alpha-D-glucosyl](n+1) + ADP + H(+). The protein operates within glycan biosynthesis; glycogen biosynthesis. Synthesizes alpha-1,4-glucan chains using ADP-glucose. The chain is Glycogen synthase from Marinobacter nauticus (strain ATCC 700491 / DSM 11845 / VT8) (Marinobacter aquaeolei).